We begin with the raw amino-acid sequence, 672 residues long: DNA ligase (672 aa).

NAD(+) contacts are provided by residues 34-38, 83-84, and glutamate 117; these read DAEYD and SL. The active-site N6-AMP-lysine intermediate is the lysine 119. NAD(+) is bound by residues arginine 140, glutamate 177, lysine 293, and lysine 317. The Zn(2+) site is built by cysteine 411, cysteine 414, cysteine 429, and cysteine 434. A BRCT domain is found at 591–672; sequence RVGGRFTGKT…FLAMLGVCRT (82 aa).

Belongs to the NAD-dependent DNA ligase family. LigA subfamily. The cofactor is Mg(2+). Mn(2+) serves as cofactor.

The enzyme catalyses NAD(+) + (deoxyribonucleotide)n-3'-hydroxyl + 5'-phospho-(deoxyribonucleotide)m = (deoxyribonucleotide)n+m + AMP + beta-nicotinamide D-nucleotide.. DNA ligase that catalyzes the formation of phosphodiester linkages between 5'-phosphoryl and 3'-hydroxyl groups in double-stranded DNA using NAD as a coenzyme and as the energy source for the reaction. It is essential for DNA replication and repair of damaged DNA. The sequence is that of DNA ligase from Geotalea uraniireducens (strain Rf4) (Geobacter uraniireducens).